The sequence spans 241 residues: Chlorophyll a-b binding protein 6, chloroplastic (241 aa).

Residues 1–35 (MASNSLMSCGIAAVYPSLLSSSKSKFVSAGVPLPN) constitute a chloroplast transit peptide. Residue Trp-48 participates in chlorophyll b binding. Chlorophyll a contacts are provided by Phe-68, Glu-87, and His-90. Arg-92 lines the chlorophyll b pocket. Residues 93-113 (WAMLAVPGILVPEALGYGNWV) form a helical membrane-spanning segment. Residue Leu-129 participates in chlorophyll a binding. Residues 132–152 (PVPWGTLPTILAIEFLAIAFV) form a helical membrane-spanning segment. The chlorophyll b site is built by Val-133, Glu-153, and Arg-156. Chlorophyll a is bound by residues Lys-190, Glu-191, Asn-194, Arg-196, Gln-208, and His-224. The chain crosses the membrane as a helical span at residues 197–217 (LALLAFVGFCVQQSAYPGTGP).

Belongs to the light-harvesting chlorophyll a/b-binding (LHC) protein family. In terms of assembly, the LHC complex consists of chlorophyll a-b binding proteins. Red-emitting heterodimer with LHCA4. Interacts with LHCA5. Binds at least 14 chlorophylls (8 Chl-a and 6 Chl-b) and carotenoids such as lutein and neoxanthin. serves as cofactor. In terms of processing, photoregulated by reversible phosphorylation of its threonine residues.

It is found in the plastid. Its subcellular location is the chloroplast thylakoid membrane. Functionally, the light-harvesting complex (LHC) functions as a light receptor, it captures and delivers excitation energy to photosystems with which it is closely associated. The sequence is that of Chlorophyll a-b binding protein 6, chloroplastic from Arabidopsis thaliana (Mouse-ear cress).